The sequence spans 449 residues: Sensor protein QseC (449 aa).

Topologically, residues Met1–Arg12 are cytoplasmic. A helical transmembrane segment spans residues Leu13–Trp33. The Periplasmic portion of the chain corresponds to Arg34–Ala161. A helical transmembrane segment spans residues Ala162–Leu182. An HAMP domain is found at His183 to Val235. Topologically, residues His183 to Trp449 are cytoplasmic. The Histidine kinase domain maps to Asp243–Trp449. Residue His246 is modified to Phosphohistidine; by autocatalysis.

Its subcellular location is the cell inner membrane. It carries out the reaction ATP + protein L-histidine = ADP + protein N-phospho-L-histidine.. Its function is as follows. Member of a two-component regulatory system QseB/QseC. Activates the flagella regulon by activating transcription of FlhDC. May activate QseB by phosphorylation. The sequence is that of Sensor protein QseC (qseC) from Salmonella typhi.